A 169-amino-acid chain; its full sequence is Protein Flattop homolog (169 aa).

The tract at residues 53–169 (IPRSSRSPWG…SPKLATPEPC (117 aa)) is disordered. Residues 119–130 (VQASPRNASPLQ) are compositionally biased toward polar residues.

Belongs to the Flattop family.

It is found in the cytoplasm. Its subcellular location is the cytoskeleton. The protein localises to the cilium basal body. It localises to the cell projection. The protein resides in the cilium. It is found in the apical cell membrane. Its function is as follows. Acts as a regulator of cilium basal body docking and positioning in mono- and multiciliated cells. The sequence is that of Protein Flattop homolog from Nematostella vectensis (Starlet sea anemone).